Consider the following 1886-residue polypeptide: Nuclear pore membrane glycoprotein 210 (1886 aa).

A signal peptide spans 1–25 (MARASLIQPGLWALLLLQAVGPAVA). The Perinuclear space segment spans residues 26–1805 (AKLNIPKVLL…GASLLSHFLD (1780 aa)). N-linked (GlcNAc...) asparagine glycans are attached at residues N337, N484, N681, and N1039. The region spanning 1078–1151 (FPPFRLIPRK…VQAVDAETGK (74 aa)) is the BIG2 domain. Residues 1806-1828 (SYQVMFFTFFALLAGTAVTIIAY) traverse the membrane as a helical segment. The Cytoplasmic segment spans residues 1829 to 1886 (HTVCAPRELASPLALTPHASPQHSPHYLASSPTAFNTLPSDRKASPPSGLWSPAYASH). Residue S1839 is modified to Phosphoserine. The residue at position 1844 (T1844) is a Phosphothreonine. Residues 1866 to 1886 (LPSDRKASPPSGLWSPAYASH) are disordered. Phosphoserine occurs at positions 1873, 1876, 1880, and 1885.

The protein belongs to the NUP210 family. In terms of assembly, forms dimers and possibly higher-order oligomers. N-glycosylated, but not all potential glycosylation sites may be used. Contains high-mannose type oligosaccharides. In terms of processing, phosphorylated at Ser-1880 in mitosis specifically; not phosphorylated in interphase.

It is found in the nucleus. The protein resides in the nuclear pore complex. It localises to the nucleus membrane. The protein localises to the endoplasmic reticulum membrane. Its function is as follows. Nucleoporin essential for nuclear pore assembly and fusion, nuclear pore spacing, as well as structural integrity. This is Nuclear pore membrane glycoprotein 210 (Nup210) from Rattus norvegicus (Rat).